We begin with the raw amino-acid sequence, 392 residues long: Phosphoglycerate kinase (392 aa).

Residues 21 to 23, R36, 59 to 62, R113, and R146 contribute to the substrate site; these read DFN and HLGR. ATP-binding positions include K197, E319, and 345 to 348; that span reads GGDT.

It belongs to the phosphoglycerate kinase family. Monomer.

The protein resides in the cytoplasm. It carries out the reaction (2R)-3-phosphoglycerate + ATP = (2R)-3-phospho-glyceroyl phosphate + ADP. It functions in the pathway carbohydrate degradation; glycolysis; pyruvate from D-glyceraldehyde 3-phosphate: step 2/5. This Francisella tularensis subsp. tularensis (strain FSC 198) protein is Phosphoglycerate kinase.